The chain runs to 447 residues: N-succinylarginine dihydrolase (447 aa).

Residues 19 to 28 (AGLSFGNEAS), Asn110, and 137 to 138 (HR) each bind substrate. Residue Glu174 is part of the active site. Residue Arg212 coordinates substrate. His248 is an active-site residue. Residues Asp250 and Asn359 each coordinate substrate. Cys365 (nucleophile) is an active-site residue.

This sequence belongs to the succinylarginine dihydrolase family. Homodimer.

It catalyses the reaction N(2)-succinyl-L-arginine + 2 H2O + 2 H(+) = N(2)-succinyl-L-ornithine + 2 NH4(+) + CO2. It participates in amino-acid degradation; L-arginine degradation via AST pathway; L-glutamate and succinate from L-arginine: step 2/5. In terms of biological role, catalyzes the hydrolysis of N(2)-succinylarginine into N(2)-succinylornithine, ammonia and CO(2). The sequence is that of N-succinylarginine dihydrolase from Escherichia coli O9:H4 (strain HS).